We begin with the raw amino-acid sequence, 93 residues long: Neurophysin 1 (93 aa).

7 disulfides stabilise this stretch: cysteine 10/cysteine 54, cysteine 13/cysteine 27, cysteine 21/cysteine 44, cysteine 28/cysteine 34, cysteine 61/cysteine 74, cysteine 68/cysteine 86, and cysteine 75/cysteine 80.

Belongs to the vasopressin/oxytocin family.

Its function is as follows. Neurophysin 1 specifically binds oxytocin. This Struthio camelus (Common ostrich) protein is Neurophysin 1.